The chain runs to 906 residues: Inactive angiotensin-converting enzyme-related protein (906 aa).

The signal sequence occupies residues 1–19 (MKFHILLLLLVGACLPVFT). A disordered region spans residues 28–95 (LLPADEAPKD…SPTPEPEPAI (68 aa)). Residues 67–83 (PEPKPEPEPEPEPKPEP) show a composition bias toward basic and acidic residues. An N-linked (GlcNAc...) asparagine glycan is attached at asparagine 159. The region spanning 175–765 (IKDEEKLRSW…EIDQVVVGWD (591 aa)) is the Peptidase M2 domain. A disulfide bridge links cysteine 289 with cysteine 297. N-linked (GlcNAc...) asparagine glycosylation occurs at asparagine 653. The disordered stretch occupies residues 862 to 882 (VTTPEPSAEPEPTAKTTTKMP). Low complexity predominate over residues 863–882 (TTPEPSAEPEPTAKTTTKMP).

This sequence belongs to the peptidase M2 family. Expressed in the hypodermis, in the vulva during organogenesis, and in the ray papillae of the male tail.

Its function is as follows. Inactive as a metallopeptidase, due to a lack of active site residues. Required for larval molting, male tail development, and formation of adult alae. Acts in the heterochronic pathway and plays a role in the developmental timing of postembryonic hypodermal seam cell division and adult alae production. Acts synergistically with apl-1 in let-7 regulated postembryonic cell division events. Might act downstream of the heterochronic protein lin-41. Negative regulator of lifespan, heat and oxidative stress response and age-related degenerative changes like reduced pharyngeal pumping and decreased body movements. Lifespan restriction is dependent on the forkhead-type transcription factor daf-16. This chain is Inactive angiotensin-converting enzyme-related protein, found in Caenorhabditis elegans.